Consider the following 241-residue polypeptide: Probable 2-phosphosulfolactate phosphatase (241 aa).

The protein belongs to the ComB family. Requires Mg(2+) as cofactor.

It carries out the reaction (2R)-O-phospho-3-sulfolactate + H2O = (2R)-3-sulfolactate + phosphate. The protein is Probable 2-phosphosulfolactate phosphatase of Deinococcus geothermalis (strain DSM 11300 / CIP 105573 / AG-3a).